We begin with the raw amino-acid sequence, 294 residues long: tRNA-cytidine(32) 2-sulfurtransferase (294 aa).

Positions 58 to 63 (SGGKDS) match the PP-loop motif motif. Positions 133, 136, and 224 each coordinate [4Fe-4S] cluster.

This sequence belongs to the TtcA family. As to quaternary structure, homodimer. Mg(2+) is required as a cofactor. It depends on [4Fe-4S] cluster as a cofactor.

The protein localises to the cytoplasm. It carries out the reaction cytidine(32) in tRNA + S-sulfanyl-L-cysteinyl-[cysteine desulfurase] + AH2 + ATP = 2-thiocytidine(32) in tRNA + L-cysteinyl-[cysteine desulfurase] + A + AMP + diphosphate + H(+). It functions in the pathway tRNA modification. Functionally, catalyzes the ATP-dependent 2-thiolation of cytidine in position 32 of tRNA, to form 2-thiocytidine (s(2)C32). The sulfur atoms are provided by the cysteine/cysteine desulfurase (IscS) system. The sequence is that of tRNA-cytidine(32) 2-sulfurtransferase from Ruegeria pomeroyi (strain ATCC 700808 / DSM 15171 / DSS-3) (Silicibacter pomeroyi).